Consider the following 180-residue polypeptide: Large ribosomal subunit protein uL5 (180 aa).

This sequence belongs to the universal ribosomal protein uL5 family. Part of the 50S ribosomal subunit; part of the 5S rRNA/L5/L18/L25 subcomplex. Contacts the 5S rRNA and the P site tRNA. Forms a bridge to the 30S subunit in the 70S ribosome.

Functionally, this is one of the proteins that bind and probably mediate the attachment of the 5S RNA into the large ribosomal subunit, where it forms part of the central protuberance. In the 70S ribosome it contacts protein S13 of the 30S subunit (bridge B1b), connecting the 2 subunits; this bridge is implicated in subunit movement. Contacts the P site tRNA; the 5S rRNA and some of its associated proteins might help stabilize positioning of ribosome-bound tRNAs. In Streptococcus suis (strain 05ZYH33), this protein is Large ribosomal subunit protein uL5.